A 459-amino-acid polypeptide reads, in one-letter code: Cysteine--tRNA ligase (459 aa).

Position 28 (cysteine 28) interacts with Zn(2+). Positions 30-40 (VTIYDLCHIGH) match the 'HIGH' region motif. Cysteine 209, histidine 234, and glutamate 238 together coordinate Zn(2+). The short motif at 266–270 (KMSKS) is the 'KMSKS' region element. Lysine 269 provides a ligand contact to ATP.

The protein belongs to the class-I aminoacyl-tRNA synthetase family. In terms of assembly, monomer. Requires Zn(2+) as cofactor.

It is found in the cytoplasm. The catalysed reaction is tRNA(Cys) + L-cysteine + ATP = L-cysteinyl-tRNA(Cys) + AMP + diphosphate. The chain is Cysteine--tRNA ligase from Shewanella baltica (strain OS155 / ATCC BAA-1091).